Consider the following 224-residue polypeptide: Putative adhesin RMA_1308 (224 aa).

Residues 1-22 (MQKLLLIAATSATILSSSLSFA) form the signal peptide.

The sequence is that of Putative adhesin RMA_1308 from Rickettsia massiliae (strain Mtu5).